The following is a 151-amino-acid chain: MGKEYFLKVALREAKRAFEKGEVPVGAIIVKEGEIISKAHNSVEELKDPTAHAEMLAIKEACRRLNTKYLEGCELYVTLEPCIMCSYALVLSRIEKVIFSALDKKHGGVVSVFNILDEPTLNHRVKWEYYPLEEASELLSEFFKKLRNNII.

In terms of domain architecture, CMP/dCMP-type deaminase spans 1–111; that stretch reads MGKEYFLKVA…LDKKHGGVVS (111 aa). His52 lines the Zn(2+) pocket. The active-site Proton donor is the Glu54. Zn(2+)-binding residues include Cys82 and Cys85.

This sequence belongs to the cytidine and deoxycytidylate deaminase family. Homodimer. It depends on Zn(2+) as a cofactor.

It carries out the reaction adenosine(34) in tRNA + H2O + H(+) = inosine(34) in tRNA + NH4(+). Functionally, catalyzes the deamination of adenosine to inosine at the wobble position 34 of tRNA(Arg2). The sequence is that of tRNA-specific adenosine deaminase from Aquifex aeolicus (strain VF5).